A 225-amino-acid chain; its full sequence is NAD(P)H-quinone oxidoreductase subunit K, chloroplastic (225 aa).

[4Fe-4S] cluster contacts are provided by C43, C44, C108, and C139.

It belongs to the complex I 20 kDa subunit family. As to quaternary structure, NDH is composed of at least 16 different subunits, 5 of which are encoded in the nucleus. [4Fe-4S] cluster is required as a cofactor.

It localises to the plastid. It is found in the chloroplast thylakoid membrane. It catalyses the reaction a plastoquinone + NADH + (n+1) H(+)(in) = a plastoquinol + NAD(+) + n H(+)(out). It carries out the reaction a plastoquinone + NADPH + (n+1) H(+)(in) = a plastoquinol + NADP(+) + n H(+)(out). NDH shuttles electrons from NAD(P)H:plastoquinone, via FMN and iron-sulfur (Fe-S) centers, to quinones in the photosynthetic chain and possibly in a chloroplast respiratory chain. The immediate electron acceptor for the enzyme in this species is believed to be plastoquinone. Couples the redox reaction to proton translocation, and thus conserves the redox energy in a proton gradient. The protein is NAD(P)H-quinone oxidoreductase subunit K, chloroplastic of Populus trichocarpa (Western balsam poplar).